The primary structure comprises 172 residues: Photosystem I assembly protein Ycf3 (172 aa).

3 TPR repeats span residues 35–70, 74–107, and 122–155; these read AFTYYRDGAIMSAQSEGNYAEALQNYYEATRSEIDP, SYILYNIGLIHTSNGEHTKALEYYFQAIERNPFL, and GERAILRGDSEIAEAWFDQAAEYWKQAIGLTPGN.

The protein belongs to the Ycf3 family.

The protein localises to the plastid. The protein resides in the chloroplast thylakoid membrane. Essential for the assembly of the photosystem I (PSI) complex. May act as a chaperone-like factor to guide the assembly of the PSI subunits. The sequence is that of Photosystem I assembly protein Ycf3 from Dioscorea elephantipes (Elephant's foot yam).